The chain runs to 879 residues: Translation initiation factor IF-2 (879 aa).

Disordered regions lie at residues Ala45–Arg216 and Ser228–Val293. Composition is skewed to basic and acidic residues over residues Asn60–Ser72, Arg83–Pro99, and Ala107–Gln163. Residues Met164–Gln173 show a composition bias toward low complexity. 3 stretches are compositionally biased toward basic and acidic residues: residues Glu174–Arg216, Ser228–Asn271, and Arg280–Lys291. Positions Val380–Thr549 constitute a tr-type G domain. The segment at Gly389–Thr396 is G1. Gly389–Thr396 contacts GTP. The G2 stretch occupies residues Gly414–His418. The tract at residues Asp435 to Gly438 is G3. GTP is bound by residues Asp435–His439 and Asn489–Asp492. The G4 stretch occupies residues Asn489–Asp492. The segment at Ser525 to Lys527 is G5.

The protein belongs to the TRAFAC class translation factor GTPase superfamily. Classic translation factor GTPase family. IF-2 subfamily.

It localises to the cytoplasm. Functionally, one of the essential components for the initiation of protein synthesis. Protects formylmethionyl-tRNA from spontaneous hydrolysis and promotes its binding to the 30S ribosomal subunits. Also involved in the hydrolysis of GTP during the formation of the 70S ribosomal complex. The chain is Translation initiation factor IF-2 from Dichelobacter nodosus (strain VCS1703A).